The sequence spans 98 residues: Large ribosomal subunit protein uL23 (98 aa).

Belongs to the universal ribosomal protein uL23 family. In terms of assembly, part of the 50S ribosomal subunit. Contacts protein L29, and trigger factor when it is bound to the ribosome.

In terms of biological role, one of the early assembly proteins it binds 23S rRNA. One of the proteins that surrounds the polypeptide exit tunnel on the outside of the ribosome. Forms the main docking site for trigger factor binding to the ribosome. This chain is Large ribosomal subunit protein uL23, found in Bordetella avium (strain 197N).